The following is a 35-amino-acid chain: Alpha-amanitin proprotein 1 (35 aa).

Residues M1–P10 constitute a propeptide that is removed on maturation. I11 bears the (3R,4R)-4,5-dihydroxyisoleucine; in form alpha-amanitin mark. The residue at position 11 (I11) is a (3R,4S)-4-hydroxyisoleucine; in form gamma-amanitin. A cross-link (cyclopeptide (Ile-Pro)) is located at residues I11–P18. Residues W12–C16 constitute a cross-link (2'-cysteinyl-6'-hydroxytryptophan sulfoxide (Trp-Cys)). P18 bears the 4-hydroxyproline mark. A propeptide spanning residues C19 to C35 is cleaved from the precursor.

This sequence belongs to the MSDIN fungal toxin family. Processed by the macrocyclase-peptidase enzyme POPB to yield a toxic cyclic octapeptide. POPB first removes 10 residues from the N-terminus. Conformational trapping of the remaining peptide forces the enzyme to release this intermediate rather than proceed to macrocyclization. The enzyme rebinds the remaining peptide in a different conformation and catalyzes macrocyclization of the N-terminal 8 residues. In terms of tissue distribution, expressed in basidiocarps.

In terms of biological role, major toxin belonging to the bicyclic octapeptides amatoxins that acts by binding non-competitively to RNA polymerase II and greatly slowing the elongation of transcripts from target promoters. In Amanita exitialis (Guangzhou destroying angel), this protein is Alpha-amanitin proprotein 1.